The primary structure comprises 293 residues: Dioxygenase cdmA (293 aa).

3 residues coordinate Fe cation: H135, D137, and H212.

This sequence belongs to the PhyH family. In terms of assembly, homodimer. Fe cation is required as a cofactor.

The catalysed reaction is chrodrimanin C + 2-oxoglutarate + O2 = verruculide A + succinate + CO2 + H2O. The enzyme catalyses chrodrimanin H + 2-oxoglutarate + O2 = chrodrimanin E + succinate + CO2 + H2O. The protein operates within secondary metabolite biosynthesis; terpenoid biosynthesis. Functionally, dioxygenase; part of the gene cluster that mediates the biosynthesis of chrodrimanin B, a meroterpenoid that acts as a potent blocker of insect GABA-gated chloride channels. The first step of the pathway is the biosynthesis of 6-hydroxymellein by the polyketide synthase cdmE. The prenyltransferase cdmH acts as a 6-hydroxymellein 5-farnesyltransferase and produces the hydrophobic metabolite verruculide C. The FAD-dependent monooxygenase cdmI further converts verruculide C into verruculide B. The terpene cyclase cdmG then produced the pentacyclic molecule 3-hydroxypentacecilide A, the backbone structure of chrodrimanin B, via folding the farnesyl moiety of the substrate into the chair-boat conformation. The short-chain dehydrogenase/reductase cdmF functions as the 3-OH dehydrogenase that oxidizes the C-3 hydroxyl group of 3-hydroxypentacecilide A and produces chrodrimanin C, the dehydrogenated product of 3-hydroxypentacecilide A. The cytochrome P450 monooxygenase cdmJ then accepts both 3-hydroxypentacecilide A and chrodrimanin C and functions as a C-7-beta-hydroxylase to produce respectively chrodrimanin H and chrodrimanin F. The dioxygenase cdmA accepts chrodrimanin H to afford chrodrimanin E, which is further transformed to chrodrimanin A by the dioxygenase cdmD. CdmA can also accept chrodrimanin C as substrate to convert it into verruculide A, which is further converted into chrodrimanin T by cdmD. The last step of the biosynthesis is proposed to be performed by the acetyltransferase cdmC which acetylates chrodrimanin A to yield chrodrimanin B. The pathway may also lead to the production of additional shunt products, including chrodrimanins T and U. This Talaromyces verruculosus (Penicillium verruculosum) protein is Dioxygenase cdmA.